The chain runs to 583 residues: Steryl-sulfatase (583 aa).

A signal peptide spans 1 to 21; that stretch reads MPLRKMKIPFLLLFFLWEAES. At 22 to 184 the chain is on the lumenal side; it reads HAASRPNIIL…GSVFTTGFKR (163 aa). Ca(2+) is bound by residues aspartate 35 and aspartate 36. Asparagine 47 carries N-linked (GlcNAc...) asparagine glycosylation. Position 75 (cysteine 75) interacts with Ca(2+). The active-site Nucleophile is cysteine 75. The residue at position 75 (cysteine 75) is a 3-oxoalanine (Cys). Residue histidine 136 is part of the active site. Intrachain disulfides connect cysteine 141-cysteine 148 and cysteine 170-cysteine 242. A helical transmembrane segment spans residues 185–208; it reads LVFLPLQIVGVTLLTLAALNCLGL. Over 209-212 the chain is Cytoplasmic; sequence LHVP. Residues 213–234 form a helical membrane-spanning segment; the sequence is LGVFFSLLFLAALILTLFLGFL. At 235–583 the chain is on the lumenal side; the sequence is HYFRPLNCFM…REKQDKRLSR (349 aa). Asparagine 259 carries an N-linked (GlcNAc...) asparagine glycan. The Ca(2+) site is built by aspartate 342 and glutamine 343. Disulfide bonds link cysteine 446–cysteine 489, cysteine 481–cysteine 487, cysteine 562–cysteine 570, and cysteine 563–cysteine 572.

The protein belongs to the sulfatase family. Homodimer. Requires Ca(2+) as cofactor. In terms of processing, the conversion to 3-oxoalanine (also known as C-formylglycine, FGly), of a serine or cysteine residue in prokaryotes and of a cysteine residue in eukaryotes, is critical for catalytic activity.

It is found in the cytoplasmic vesicle. The protein localises to the secretory vesicle. Its subcellular location is the microneme membrane. The protein resides in the endoplasmic reticulum membrane. The catalysed reaction is dehydroepiandrosterone 3-sulfate + H2O = 3beta-hydroxyandrost-5-en-17-one + sulfate + H(+). It carries out the reaction estrone 3-sulfate + H2O = estrone + sulfate + H(+). In terms of biological role, catalyzes the conversion of sulfated steroid precursors, such as dehydroepiandrosterone sulfate (DHEA-S) and estrone sulfate to the free steroid. This chain is Steryl-sulfatase (STS), found in Homo sapiens (Human).